The sequence spans 32 residues: GLWSKIKEAAKAAGKAALNAVTGLVNQGDQPS.

As to expression, expressed by the skin glands.

It is found in the secreted. Antimicrobial peptide active against the Gram-negative bacterium E.coli (MIC=8 uM) but inactive against the Gram-positive bacterium S.aureus. Also inhibits growth of zoospores of the chytrid fungus B.dendrobatidis at high concentrations (above 25 uM). Shows anticancer activities since it is cytolytic against HepG2 human hepatoma-derived cells (LC(50)=45 uM). Is only weakly hemolytic on human erythrocytes. The sequence is that of Dermaseptin-L1 from Agalychnis lemur (Lemur leaf frog).